The sequence spans 1442 residues: DNA-binding protein RFX7 (1442 aa).

The disordered stretch occupies residues 1-36; the sequence is MEEEQQQQQQQQQAQKMQGTEQSAQLPPSAPGALPA. The RFX-type winged-helix DNA-binding region spans 112–187; it reads AFSWIRNTLE…YCYSGLRKKA (76 aa). The short motif at 192-197 is the PxLPxI/L motif element; that stretch reads PSLPNL. 3 disordered regions span residues 406-426, 485-514, and 929-1001; these read MQSV…GDRS, SAGT…KNGS, and SVTP…SVPP. Over residues 935–947 the composition is skewed to pro residues; sequence TPTPTPTPTPTLT. Polar residues predominate over residues 957–995; the sequence is GTQSLSRESPCSRLAQTTPVDSALGSSRHTPVGTPHSNC.

Belongs to the RFX family.

It is found in the nucleus. Functionally, transcription factor. Acts as a transcriptional activator by binding to promoter regions of target genes. Plays a role in natural killer (NK) cell maintenance and immunity. Plays a role in the process of ciliogenesis in the neural tube and neural tube closure by regulating the expression of RFX4. This Xenopus laevis (African clawed frog) protein is DNA-binding protein RFX7.